The following is a 1300-amino-acid chain: Zinc finger protein 536 (1300 aa).

Disordered stretches follow at residues Met-1–Leu-26 and Phe-47–Met-77. Residues Pro-48–His-69 show a composition bias toward basic and acidic residues. 6 consecutive C2H2-type zinc fingers follow at residues Tyr-130 to His-152, Phe-158 to His-180, Phe-274 to His-297, Tyr-300 to His-323, Phe-345 to His-367, and His-373 to His-395. Disordered stretches follow at residues His-584–Ser-604 and Ser-650–Ala-739. Residues Leu-594–Ser-604 show a composition bias toward basic and acidic residues. The C2H2-type 7 zinc-finger motif lies at Thr-631–His-653. A compositionally biased stretch (basic and acidic residues) spans Arg-657–Ser-674. The span at Gly-675–Glu-696 shows a compositional bias: polar residues. 2 C2H2-type zinc fingers span residues Lys-751–His-773 and Tyr-779–His-801. The interval His-802–Ser-826 is disordered. Phosphoserine is present on residues Ser-826 and Ser-827. Over residues Ser-856–Val-880 the composition is skewed to polar residues. 3 disordered regions span residues Ser-856 to Lys-893, Lys-937 to Ala-985, and Ser-1124 to Lys-1260. Composition is skewed to basic and acidic residues over residues His-950–Gln-972 and Lys-1133–Glu-1143. Composition is skewed to acidic residues over residues Asp-1160–Met-1170 and Asn-1178–Pro-1187. Residues Leu-1194–Leu-1209 are compositionally biased toward low complexity.

Belongs to the krueppel C2H2-type zinc-finger protein family.

It localises to the nucleus. In terms of biological role, transcriptional repressor that negatively regulates neuron differentiation by repressing retinoic acid-induced gene transcription. Binds and interrupts RARA from binding to retinoic acid response elements (RARE) composed of tandem 5'-AGGTCA-3' sites known as DR1-DR5. Recognizes and binds 2 copies of the core DNA sequence 5'-CCCCCA-3'. This Homo sapiens (Human) protein is Zinc finger protein 536 (ZNF536).